A 237-amino-acid polypeptide reads, in one-letter code: Ras modification protein ERF4 (237 aa).

This sequence belongs to the ERF4 family. In terms of assembly, interacts with ERF2.

It localises to the endoplasmic reticulum membrane. The ERF2-SHR5 complex is a palmitoyltransferase specific for Ras proteins. Palmitoylates RAS2, which is required for its proper plasma membrane localization. The polypeptide is Ras modification protein ERF4 (SHR5) (Saccharomyces cerevisiae (strain ATCC 204508 / S288c) (Baker's yeast)).